The primary structure comprises 402 residues: Acetate kinase (402 aa).

Asn-10 contributes to the Mg(2+) binding site. Lys-17 contacts ATP. Residue Arg-89 participates in substrate binding. Asp-148 (proton donor/acceptor) is an active-site residue. ATP is bound by residues 208 to 212 (HLGNG), 283 to 285 (DCR), and 334 to 338 (GIGEN). Glu-389 lines the Mg(2+) pocket.

It belongs to the acetokinase family. In terms of assembly, homodimer. Mg(2+) is required as a cofactor. The cofactor is Mn(2+).

It localises to the cytoplasm. It carries out the reaction acetate + ATP = acetyl phosphate + ADP. The protein operates within metabolic intermediate biosynthesis; acetyl-CoA biosynthesis; acetyl-CoA from acetate: step 1/2. Its function is as follows. Catalyzes the formation of acetyl phosphate from acetate and ATP. Can also catalyze the reverse reaction. The polypeptide is Acetate kinase (Actinobacillus pleuropneumoniae serotype 5b (strain L20)).